Reading from the N-terminus, the 485-residue chain is N-succinylglutamate 5-semialdehyde dehydrogenase 2 (485 aa).

221–226 (GSAAAG) serves as a coordination point for NAD(+). Catalysis depends on residues Glu-244 and Cys-279.

This sequence belongs to the aldehyde dehydrogenase family. AstD subfamily.

It carries out the reaction N-succinyl-L-glutamate 5-semialdehyde + NAD(+) + H2O = N-succinyl-L-glutamate + NADH + 2 H(+). It functions in the pathway amino-acid degradation; L-arginine degradation via AST pathway; L-glutamate and succinate from L-arginine: step 4/5. Catalyzes the NAD-dependent reduction of succinylglutamate semialdehyde into succinylglutamate. The sequence is that of N-succinylglutamate 5-semialdehyde dehydrogenase 2 from Caulobacter vibrioides (strain ATCC 19089 / CIP 103742 / CB 15) (Caulobacter crescentus).